The primary structure comprises 315 residues: Dihydroorotate dehydrogenase (fumarate) (315 aa).

Substrate contacts are provided by residues Lys46, 70-74 (NSMGL), and Asn130. 46 to 47 (KS) lines the FMN pocket. Asn130 serves as a coordination point for FMN. Residue Cys133 is the Nucleophile of the active site. FMN contacts are provided by Lys167 and Ile195. A substrate-binding site is contributed by 196-197 (NS). FMN is bound by residues Gly224, 252–253 (GG), and 274–275 (GT).

This sequence belongs to the dihydroorotate dehydrogenase family. Type 1 subfamily. Homodimer. It depends on FMN as a cofactor.

Its subcellular location is the cytoplasm. It catalyses the reaction (S)-dihydroorotate + fumarate = orotate + succinate. It functions in the pathway pyrimidine metabolism; UMP biosynthesis via de novo pathway. In terms of biological role, catalyzes the conversion of dihydroorotate to orotate with fumarate as the electron acceptor. This is Dihydroorotate dehydrogenase (fumarate) (URA1) from Kluyveromyces lactis (strain ATCC 8585 / CBS 2359 / DSM 70799 / NBRC 1267 / NRRL Y-1140 / WM37) (Yeast).